A 146-amino-acid polypeptide reads, in one-letter code: Large ribosomal subunit protein uL15 (146 aa).

The tract at residues 1–65 is disordered; that stretch reads MSDIQLNTLK…GQMPLQRRLP (65 aa). Residues 24-34 show a composition bias toward gly residues; the sequence is RGIGSGLGKTA.

Belongs to the universal ribosomal protein uL15 family. In terms of assembly, part of the 50S ribosomal subunit.

Its function is as follows. Binds to the 23S rRNA. The chain is Large ribosomal subunit protein uL15 from Bordetella parapertussis (strain 12822 / ATCC BAA-587 / NCTC 13253).